A 368-amino-acid chain; its full sequence is Spore germination protein B2 (368 aa).

Helical transmembrane passes span 10–30 (FMQT…LTLP), 43–63 (LMIL…LPFL), 82–102 (FIGF…VCFQ), 120–140 (MAVV…GGVY), 145–165 (VYAY…MFSF), 187–207 (LFPK…LVPF), 217–237 (AVAL…LIVI), 282–302 (FACM…IFHL), 308–328 (AWLL…PKDL), and 338–358 (LGYA…LSWI).

The protein belongs to the amino acid-polyamine-organocation (APC) superfamily. Spore germination protein (SGP) (TC 2.A.3.9) family.

It is found in the cell membrane. Involved in the response to the germinative mixture of L-asparagine, glucose, fructose and potassium ions (AGFK). Could be an amino acid transporter. Cannot stimulate germination in the absence of gerD and gerK gene products (fructose and glucose receptors, respectively). This Bacillus subtilis (strain 168) protein is Spore germination protein B2 (gerBB).